We begin with the raw amino-acid sequence, 151 residues long: uncharacterized protein (151 aa).

This is an uncharacterized protein from Lepidoptera (butterflies and moths).